The sequence spans 447 residues: MREIVHLQTGQCGNQIGAAFWQTISGEHGLDGSGVYNGTSDLQLERLNVYFNEASGNKYVPRAVLVDLEPGTMDAVRAGPFGQLFRPDNFVFGQSGAGNNWAKGHYTEGAELVDQVLDVVRREAEGCDCLQGFQITHSLGGGTGAGMGTLLISKIREEFPDRMMATFSVVPSPKVSDTVVEPYNATLSIHQLVENSDETFCIDNEALYDICMRTLKLTNPSYGDLNHLVSAVMSGVTTCLRFPGQLNSDLRKLAVNMVPFPRLHFFMVGFAPLTSRGAHSFRAVTVPELTQQMFDPKNMMAASDFRNGRYLTCSAIFRGKVSMKEVEDQMRNVQNKNSSYFVEWIPTNVQTALCSIPPRGLKMSSTFVGNSTSIQELFKRIGDQFTRMFRRKAFLHWYTGEGMDEMEFTEAESNMNDLVSEYQQYQDASISEGEEEYEEEAPMEPEE.

Residues Q11, E69, S138, G142, T143, G144, N204, and N226 each contribute to the GTP site. E69 provides a ligand contact to Mg(2+). The tract at residues 421-447 (EYQQYQDASISEGEEEYEEEAPMEPEE) is disordered. Over residues 432-447 (EGEEEYEEEAPMEPEE) the composition is skewed to acidic residues.

The protein belongs to the tubulin family. In terms of assembly, dimer of alpha and beta chains. A typical microtubule is a hollow water-filled tube with an outer diameter of 25 nm and an inner diameter of 15 nM. Alpha-beta heterodimers associate head-to-tail to form protofilaments running lengthwise along the microtubule wall with the beta-tubulin subunit facing the microtubule plus end conferring a structural polarity. Microtubules usually have 13 protofilaments but different protofilament numbers can be found in some organisms and specialized cells. It depends on Mg(2+) as a cofactor.

It localises to the cytoplasm. It is found in the cytoskeleton. Tubulin is the major constituent of microtubules, a cylinder consisting of laterally associated linear protofilaments composed of alpha- and beta-tubulin heterodimers. Microtubules grow by the addition of GTP-tubulin dimers to the microtubule end, where a stabilizing cap forms. Below the cap, tubulin dimers are in GDP-bound state, owing to GTPase activity of alpha-tubulin. This Rhynchosporium secalis (Barley scald fungus) protein is Tubulin beta chain.